Consider the following 339-residue polypeptide: D-erythrose-4-phosphate dehydrogenase (339 aa).

Residue 11–12 coordinates NAD(+); that stretch reads RI. Substrate-binding positions include 158–160, Arg204, 217–218, and Arg240; these read SCT and TK. Cys159 functions as the Nucleophile in the catalytic mechanism. Asn322 contacts NAD(+).

Belongs to the glyceraldehyde-3-phosphate dehydrogenase family. Epd subfamily. Homotetramer.

The protein localises to the cytoplasm. The catalysed reaction is D-erythrose 4-phosphate + NAD(+) + H2O = 4-phospho-D-erythronate + NADH + 2 H(+). It functions in the pathway cofactor biosynthesis; pyridoxine 5'-phosphate biosynthesis; pyridoxine 5'-phosphate from D-erythrose 4-phosphate: step 1/5. Catalyzes the NAD-dependent conversion of D-erythrose 4-phosphate to 4-phosphoerythronate. This Aliivibrio salmonicida (strain LFI1238) (Vibrio salmonicida (strain LFI1238)) protein is D-erythrose-4-phosphate dehydrogenase.